Reading from the N-terminus, the 387-residue chain is Xylose isomerase (387 aa).

Catalysis depends on residues His-54 and Asp-57. The Mg(2+) site is built by Glu-181, Glu-217, His-220, Asp-245, Asp-255, Asp-257, and Asp-287.

Belongs to the xylose isomerase family. As to quaternary structure, homotetramer. Mg(2+) serves as cofactor.

The protein resides in the cytoplasm. The catalysed reaction is alpha-D-xylose = alpha-D-xylulofuranose. In Streptomyces coelicolor (strain ATCC BAA-471 / A3(2) / M145), this protein is Xylose isomerase.